Here is a 2278-residue protein sequence, read N- to C-terminus: Protein Ycf2 (2278 aa).

ATP is bound at residue 1632–1639 (GSIGTGRS).

It belongs to the Ycf2 family.

It localises to the plastid. The protein localises to the chloroplast stroma. Functionally, probable ATPase of unknown function. Its presence in a non-photosynthetic plant (Epifagus virginiana) and experiments in tobacco indicate that it has an essential function which is probably not related to photosynthesis. This is Protein Ycf2 from Solanum tuberosum (Potato).